A 317-amino-acid polypeptide reads, in one-letter code: Curved DNA-binding protein (317 aa).

The J domain occupies 5-69 (DYYKILGVEP…QKRAEFDEIR (65 aa)).

It is found in the cytoplasm. It localises to the nucleoid. Its function is as follows. DNA-binding protein that preferentially recognizes a curved DNA sequence. It is probably a functional analog of DnaJ; displays overlapping activities with DnaJ, but functions under different conditions, probably acting as a molecular chaperone in an adaptive response to environmental stresses other than heat shock. Lacks autonomous chaperone activity; binds native substrates and targets them for recognition by DnaK. Its activity is inhibited by the binding of CbpM. This is Curved DNA-binding protein from Pseudomonas putida (strain W619).